Here is a 354-residue protein sequence, read N- to C-terminus: uncharacterized protein (354 aa).

This sequence belongs to the asfivirus B354L family.

This is an uncharacterized protein from African swine fever virus (isolate Tick/South Africa/Pretoriuskop Pr4/1996) (ASFV).